An 82-amino-acid chain; its full sequence is MSADKKQNLQDTFLNAVRKSRTPLTVFLVNGVKLQGVVTWFDNFCILLRGDGRPPQLVYKHAISTIAPSAPVQLFDEEMGGD.

Residues 11 to 72 enclose the Sm domain; sequence DTFLNAVRKS…ISTIAPSAPV (62 aa).

It belongs to the Hfq family. Homohexamer.

Its function is as follows. RNA chaperone that binds small regulatory RNA (sRNAs) and mRNAs to facilitate mRNA translational regulation in response to envelope stress, environmental stress and changes in metabolite concentrations. Also binds with high specificity to tRNAs. The protein is RNA-binding protein Hfq of Hyphomonas neptunium (strain ATCC 15444).